We begin with the raw amino-acid sequence, 453 residues long: Putative folate transporter 2 (453 aa).

A run of 11 helical transmembrane segments spans residues 41-64, 76-96, 108-126, 132-156, 176-195, 201-220, 241-260, 280-300, 312-330, 346-366, and 416-437; these read IVVY…YYLF, SLIL…ALIT, PYLF…SLAL, IQAT…EALV, IASK…YFLE, YIFM…CLFL, FINT…YMSG, SFMG…IIVY, TLIF…PIIL, VLSG…PLFI, and LSMY…VPLL.

It belongs to the major facilitator superfamily. Folate-biopterin transporter (TC 2.A.71) family.

Its subcellular location is the plastid. It is found in the apicoplast. The protein localises to the membrane. In terms of biological role, putative folate transporter. Required for sporogony of malaria parasites and host switching. This Plasmodium berghei (strain Anka) protein is Putative folate transporter 2.